The chain runs to 971 residues: Exportin-2 (971 aa).

Met-1 is subject to N-acetylmethionine. Residues 29–102 (AEKFLESVEG…KANIVHLMLS (74 aa)) form the Importin N-terminal domain. Ser-112 bears the Phosphoserine mark. Lys-574 and Lys-824 each carry N6-acetyllysine. At Ser-931 the chain carries Phosphoserine.

Belongs to the XPO2/CSE1 family. Found in a complex with CSE1L/XPO2, Ran and KPNA2. Binds with high affinity to importin-alpha only in the presence of RanGTP. The complex is dissociated by the combined action of RanBP1 and RanGAP1. Interacts with CFTR. As to expression, ubiquitous. Detected in embryos from 5 to 17 dpc. Highly expressed in adult testis, heart, brain, lung, liver, skeletal muscle, spleen and kidney.

It localises to the cytoplasm. The protein resides in the nucleus. In terms of biological role, export receptor for importin-alpha. Mediates importin-alpha re-export from the nucleus to the cytoplasm after import substrates (cargos) have been released into the nucleoplasm. In the nucleus binds cooperatively to importin-alpha and to the GTPase Ran in its active GTP-bound form. Docking of this trimeric complex to the nuclear pore complex (NPC) is mediated through binding to nucleoporins. Upon transit of a nuclear export complex into the cytoplasm, disassembling of the complex and hydrolysis of Ran-GTP to Ran-GDP (induced by RANBP1 and RANGAP1, respectively) cause release of the importin-alpha from the export receptor. CSE1L/XPO2 then return to the nuclear compartment and mediate another round of transport. The directionality of nuclear export is thought to be conferred by an asymmetric distribution of the GTP- and GDP-bound forms of Ran between the cytoplasm and nucleus. The chain is Exportin-2 (Cse1l) from Mus musculus (Mouse).